We begin with the raw amino-acid sequence, 362 residues long: Aminomethyltransferase (362 aa).

The protein belongs to the GcvT family. As to quaternary structure, the glycine cleavage system is composed of four proteins: P, T, L and H.

The enzyme catalyses N(6)-[(R)-S(8)-aminomethyldihydrolipoyl]-L-lysyl-[protein] + (6S)-5,6,7,8-tetrahydrofolate = N(6)-[(R)-dihydrolipoyl]-L-lysyl-[protein] + (6R)-5,10-methylene-5,6,7,8-tetrahydrofolate + NH4(+). The glycine cleavage system catalyzes the degradation of glycine. In Chromobacterium violaceum (strain ATCC 12472 / DSM 30191 / JCM 1249 / CCUG 213 / NBRC 12614 / NCIMB 9131 / NCTC 9757 / MK), this protein is Aminomethyltransferase.